The primary structure comprises 101 residues: ATP synthase subunit c (101 aa).

2 helical membrane passes run 35–55 and 81–101; these read IGAG…GLIG and GISE…IFVV.

The protein belongs to the ATPase C chain family. F-type ATPases have 2 components, F(1) - the catalytic core - and F(0) - the membrane proton channel. F(1) has five subunits: alpha(3), beta(3), gamma(1), delta(1), epsilon(1). F(0) has three main subunits: a(1), b(2) and c(10-14). The alpha and beta chains form an alternating ring which encloses part of the gamma chain. F(1) is attached to F(0) by a central stalk formed by the gamma and epsilon chains, while a peripheral stalk is formed by the delta and b chains.

The protein localises to the cell membrane. F(1)F(0) ATP synthase produces ATP from ADP in the presence of a proton or sodium gradient. F-type ATPases consist of two structural domains, F(1) containing the extramembraneous catalytic core and F(0) containing the membrane proton channel, linked together by a central stalk and a peripheral stalk. During catalysis, ATP synthesis in the catalytic domain of F(1) is coupled via a rotary mechanism of the central stalk subunits to proton translocation. Functionally, key component of the F(0) channel; it plays a direct role in translocation across the membrane. A homomeric c-ring of between 10-14 subunits forms the central stalk rotor element with the F(1) delta and epsilon subunits. This chain is ATP synthase subunit c, found in Mycoplasma capricolum subsp. capricolum (strain California kid / ATCC 27343 / NCTC 10154).